Reading from the N-terminus, the 849-residue chain is Putative respiratory burst oxidase homolog protein G (849 aa).

Basic and acidic residues predominate over residues 1 to 17 (MQRVSFEVKDTEAEKSS). The segment at 1 to 53 (MQRVSFEVKDTEAEKSSSEILSGSLPSTYRNPAMENVGNAVDDGSSVKNNPKL) is disordered. The Cytoplasmic segment spans residues 1–303 (MQRVSFEVKD…RFFVLDSWQR (303 aa)). The segment covering 18–27 (SEILSGSLPS) has biased composition (low complexity). EF-hand-like stretches follow at residues 118 to 128 (TANTDGLLLRS) and 153 to 164 (SHLKGDVITETE). EF-hand domains follow at residues 176-211 (SFDS…SSSA) and 220-255 (KADE…AETK). Residues Asp-189, Asp-191, Asp-193, Arg-195, and Glu-200 each contribute to the Ca(2+) site. Phosphoserine is present on Ser-270. The chain crosses the membrane as a helical span at residues 304–324 (VWVIALWLTIMAILFAYKYIQ). Topologically, residues 325 to 392 (YKNRAVYEVL…LNFHKVIAVG (68 aa)) are extracellular. Residues 342–502 (KGAAETLKLN…LFVIVYILLV (161 aa)) form the Ferric oxidoreductase domain. A helical transmembrane segment spans residues 393–409 (IAIGVAIHSVSHLACDF). Topologically, residues 410-444 (PLLIAATPAEYMPLGKFFGEEQPKRYLHFVKSTEG) are cytoplasmic. Residues 445 to 465 (ITGLVMVFLMVIAFTLAMPWF) traverse the membrane as a helical segment. At 466 to 489 (RRGKLEKKLPGPLKKLASFNAFWY) the chain is on the extracellular side. The chain crosses the membrane as a helical span at residues 490-510 (THHLFVIVYILLVLHGYYIYL). Residues 511 to 518 (NKEWYKKT) are Cytoplasmic-facing. The chain crosses the membrane as a helical span at residues 519-536 (TWMYLAVPVALYAYERLI). Residues 537-659 (RAFRSSIRTV…PYGAPAQDYK (123 aa)) lie on the Extracellular side of the membrane. An FAD-binding FR-type domain is found at 541 to 657 (SSIRTVKVLK…DGPYGAPAQD (117 aa)). The helical transmembrane segment at 660-680 (KYEVVLLIGLGIGATPMISII) threads the bilayer. At 681–849 (KDIINNTETK…TRFSFHKENF (169 aa)) the chain is on the cytoplasmic side.

The protein belongs to the RBOH (TC 5.B.1.3) family. Monomer and homodimer.

It is found in the membrane. In terms of biological role, calcium-dependent NADPH oxidase that generates superoxide. This Arabidopsis thaliana (Mouse-ear cress) protein is Putative respiratory burst oxidase homolog protein G (RBOHG).